The chain runs to 305 residues: UDP-3-O-acyl-N-acetylglucosamine deacetylase (305 aa).

Zn(2+)-binding residues include histidine 79, histidine 238, and aspartate 242. Catalysis depends on histidine 265, which acts as the Proton donor.

This sequence belongs to the LpxC family. Zn(2+) serves as cofactor.

The enzyme catalyses a UDP-3-O-[(3R)-3-hydroxyacyl]-N-acetyl-alpha-D-glucosamine + H2O = a UDP-3-O-[(3R)-3-hydroxyacyl]-alpha-D-glucosamine + acetate. Its pathway is glycolipid biosynthesis; lipid IV(A) biosynthesis; lipid IV(A) from (3R)-3-hydroxytetradecanoyl-[acyl-carrier-protein] and UDP-N-acetyl-alpha-D-glucosamine: step 2/6. Functionally, catalyzes the hydrolysis of UDP-3-O-myristoyl-N-acetylglucosamine to form UDP-3-O-myristoylglucosamine and acetate, the committed step in lipid A biosynthesis. The sequence is that of UDP-3-O-acyl-N-acetylglucosamine deacetylase from Vibrio campbellii (strain ATCC BAA-1116).